Reading from the N-terminus, the 441-residue chain is Fibroleukin (441 aa).

A signal peptide spans 1–15; sequence MKLANWCWLSSTVLA. The N-linked (GlcNAc...) asparagine glycan is linked to N25. Residues 73 to 167 are a coiled coil; the sequence is SRIEEVFKEV…LEKLNLVNMN (95 aa). Residues 102-128 are disordered; it reads QADDSRDPGRNGLLLPGTGAPGETGDN. Residues N179, N237, N265, and N338 are each glycosylated (N-linked (GlcNAc...) asparagine). The 233-residue stretch at 206-438 folds into the Fibrinogen C-terminal domain; sequence VQQHLIYKDC…EVKMMIRPKH (233 aa).

Homotetramer; disulfide-linked.

Its subcellular location is the secreted. Functionally, may play a role in physiologic lymphocyte functions at mucosal sites. This is Fibroleukin (FGL2) from Bos taurus (Bovine).